The primary structure comprises 236 residues: Phosphoribosylaminoimidazole-succinocarboxamide synthase (236 aa).

It belongs to the SAICAR synthetase family.

It carries out the reaction 5-amino-1-(5-phospho-D-ribosyl)imidazole-4-carboxylate + L-aspartate + ATP = (2S)-2-[5-amino-1-(5-phospho-beta-D-ribosyl)imidazole-4-carboxamido]succinate + ADP + phosphate + 2 H(+). The protein operates within purine metabolism; IMP biosynthesis via de novo pathway; 5-amino-1-(5-phospho-D-ribosyl)imidazole-4-carboxamide from 5-amino-1-(5-phospho-D-ribosyl)imidazole-4-carboxylate: step 1/2. The polypeptide is Phosphoribosylaminoimidazole-succinocarboxamide synthase (Pseudomonas syringae pv. tomato (strain ATCC BAA-871 / DC3000)).